A 483-amino-acid chain; its full sequence is Glutamate--tRNA ligase (483 aa).

The 'HIGH' region signature appears at 11–21; it reads PSPTGLLHIGN. A 'KMSKS' region motif is present at residues 255–259; sequence KLSKR. Position 258 (lysine 258) interacts with ATP.

Belongs to the class-I aminoacyl-tRNA synthetase family. Glutamate--tRNA ligase type 1 subfamily. In terms of assembly, monomer.

The protein resides in the cytoplasm. The catalysed reaction is tRNA(Glu) + L-glutamate + ATP = L-glutamyl-tRNA(Glu) + AMP + diphosphate. In terms of biological role, catalyzes the attachment of glutamate to tRNA(Glu) in a two-step reaction: glutamate is first activated by ATP to form Glu-AMP and then transferred to the acceptor end of tRNA(Glu). In Lactococcus lactis subsp. cremoris (strain MG1363), this protein is Glutamate--tRNA ligase.